Consider the following 280-residue polypeptide: Transcription factor HES-1 (280 aa).

The disordered stretch occupies residues 1-44; the sequence is MPADIMEKNSSSPVAATPASVNTTPDKPKTASEHRKSSKPIMEK. Over residues 10–21 the composition is skewed to low complexity; sequence SSSPVAATPASV. The segment covering 26 to 35 has biased composition (basic and acidic residues); it reads DKPKTASEHR. Residues 34–91 form the bHLH domain; sequence HRKSSKPIMEKRRRARINESLSQLKTLILDALKKDSSRHSKLEKADILEMTVKHLRNL. One can recognise an Orange domain in the interval 110–143; sequence YRAGFSECMNEVTRFLSTCEGVNTEVRTRLLGHL. 2 disordered regions span residues 157–200 and 254–280; these read GQPH…PPGG and TSVGPNAVSPSSGPSLTADSMWRPWRN. Composition is skewed to pro residues over residues 164 to 174 and 181 to 200; these read QAPPPPPPGPG and FAPPPPLVPIPGGAAPPPGG. Residues 254 to 271 show a composition bias toward polar residues; that stretch reads TSVGPNAVSPSSGPSLTA. Positions 275-278 match the WRPW motif motif; it reads WRPW.

Transcription repression requires formation of a complex with a corepressor protein of the Groucho/TLE family. Interacts (via WPRW motif) with TLE1, and more weakly with TLE2. Interacts with HES6. Interacts with SIRT1. Interacts with an FA complex, composed of FANCA, FANCF, FANCG and FANCL, but not of FANCC, nor FANCE. Post-translationally, (Microbial infection) Ubiquitinated via human cytomegalovirus/HCMV protein IE1 that assembles a HES1 ubiquitination complex; leading to HES1 proteasomal degradation.

Its subcellular location is the nucleus. In terms of biological role, transcriptional repressor of genes that require a bHLH protein for their transcription. May act as a negative regulator of myogenesis by inhibiting the functions of MYOD1 and ASH1. Binds DNA on N-box motifs: 5'-CACNAG-3' with high affinity and on E-box motifs: 5'-CANNTG-3' with low affinity. May play a role in a functional FA core complex response to DNA cross-link damage, being required for the stability and nuclear localization of FA core complex proteins, as well as for FANCD2 monoubiquitination in response to DNA damage. This is Transcription factor HES-1 (HES1) from Homo sapiens (Human).